The sequence spans 80 residues: UPF0270 protein ASA_3305 (80 aa).

This sequence belongs to the UPF0270 family.

In Aeromonas salmonicida (strain A449), this protein is UPF0270 protein ASA_3305.